The following is a 184-amino-acid chain: UPF0301 protein RSKD131_2391 (184 aa).

The protein belongs to the UPF0301 (AlgH) family.

This chain is UPF0301 protein RSKD131_2391, found in Cereibacter sphaeroides (strain KD131 / KCTC 12085) (Rhodobacter sphaeroides).